Here is a 3898-residue protein sequence, read N- to C-terminus: Genome polyprotein (3898 aa).

A Peptidase C53 domain is found at 1 to 168 (MELITNELLY…LDCPLWVTSC (168 aa)). 3 disordered regions span residues 47 to 72 (LPHK…CRSG), 172 to 209 (KEEG…KPPD), and 223 to 245 (KKGK…KPPE). Active-site for N-terminal protease activity residues include H49 and C69. Basic and acidic residues predominate over residues 172 to 207 (KEEGATKKKQQKPDRLEKGRMKIVPKESEKDSKTKP). N-linked (GlcNAc...) asparagine; by host glycosylation is found at N272, N281, N296, and N335. 2 disulfides stabilise this stretch: C308–C352 and C338–C339. Residues H344, E345, K348, and H349 each act as for E(rns) glycoprotein RNase activity in the active site. 2 N-linked (GlcNAc...) asparagine; by host glycosylation sites follow: N365 and N370. Disulfide bonds link C380–C425 and C384–C408. 3 N-linked (GlcNAc...) asparagine; by host glycosylation sites follow: N413, N487, and N597. Topologically, residues 498-666 (ASPYCDVDRK…WNAATTTAFL (169 aa)) are lumenal. Residues 667 to 687 (VCLIKMVRGQVVQGILWLLLI) form a helical membrane-spanning segment. The Lumenal portion of the chain corresponds to 688–1035 (TGVQGHLDCK…DHHRDYFAES (348 aa)). 2 cysteine pairs are disulfide-bonded: C696/C740 and C751/C798. N-linked (GlcNAc...) asparagine; by host glycans are attached at residues N809, N878, N922, and N990. The next 8 helical transmembrane spans lie at 1036–1056 (ILVV…LVTY), 1079–1099 (NLLT…YLLL), 1108–1128 (VLLL…VILL), 1144–1164 (LGQI…LIIA), 1189–1209 (PGVD…SYVT), 1217–1237 (WLQC…LIHL), 1247–1267 (IPNW…TVVT), and 1281–1301 (VPIL…ILIL). N1357 carries N-linked (GlcNAc...) asparagine; by host glycosylation. The helical transmembrane segment at 1360 to 1380 (MLLPLVRATLISCVSSKWQLI) threads the bilayer. N-linked (GlcNAc...) asparagine; by host glycosylation is present at N1419. Residues 1441–1589 (RNLIIKHKVR…DLEHLGWILR (149 aa)) enclose the Peptidase C74 domain. The active-site For cysteine protease NS2 activity is the H1447. A glycan (N-linked (GlcNAc...) asparagine; by host) is linked at N1451. Active-site for cysteine protease NS2 activity residues include E1461 and C1512. Residues 1568–1588 (MLMVGNLGEEVGDLEHLGWIL) traverse the membrane as a helical segment. The 174-residue stretch at 1590–1763 (GPAVCKKITE…LPIFEASSGR (174 aa)) folds into the Peptidase S31 domain. Catalysis depends on charge relay system; for serine protease NS3 activity residues H1658 and D1695. A glycan (N-linked (GlcNAc...) asparagine; by host) is linked at N1713. S1752 acts as the Charge relay system; for serine protease NS3 activity in catalysis. The Helicase ATP-binding domain maps to 1802–1960 (ITSMNRGDFK…QKHPIEEFIA (159 aa)). Residue 1815 to 1822 (LATGAGKT) participates in ATP binding. The DEAH box motif lies at 1910 to 1913 (DEYH). Residues 1978–2143 (GLKIPVDEMK…NVTKSFREMN (166 aa)) form the Helicase C-terminal domain. 7 N-linked (GlcNAc...) asparagine; by host glycosylation sites follow: N2134, N2217, N2494, N2682, N2751, N2891, and N2988. T3499 and L3501 together coordinate GTP. A RdRp catalytic domain is found at 3518 to 3641 (PVAVSFDTKA…ITEKGLGLKF (124 aa)). An N-linked (GlcNAc...) asparagine; by host glycan is attached at N3688. Residues R3696 and K3704 each coordinate GTP. N3777 and N3793 each carry an N-linked (GlcNAc...) asparagine; by host glycan.

This sequence belongs to the pestivirus polyprotein family. As to quaternary structure, homodimer; disulfide-linked. Homodimer; disulfide-linked. Heterodimer with E1; disulfide-linked. In terms of assembly, interacts with host IFIH1/MDA5; this interaction is involved in the inhibition of IFN-beta production. Post-translationally, heavily glycosylated. In terms of processing, the viral RNA of pestiviruses is expressed as a single polyprotein which undergoes post-translational proteolytic processing resulting in the production of at least eleven individual proteins. The N-terminal protease cleaves itself from the nascent polyprotein autocatalytically and thereby generates the N-terminus of the adjacent viral capsid protein C. Cleavage between E2 and p7 is partial.

The protein resides in the virion. It is found in the host membrane. Its subcellular location is the virion membrane. The protein localises to the host endoplasmic reticulum membrane. It localises to the host cytoplasm. It catalyses the reaction Leu is conserved at position P1 for all four cleavage sites. Alanine is found at position P1' of the NS4A-NS4B cleavage site, whereas serine is found at position P1' of the NS3-NS4A, NS4B-NS5A and NS5A-NS5B cleavage sites.. The enzyme catalyses RNA(n) + a ribonucleoside 5'-triphosphate = RNA(n+1) + diphosphate. It carries out the reaction a ribonucleoside 5'-triphosphate + H2O = a ribonucleoside 5'-diphosphate + phosphate + H(+). The catalysed reaction is ATP + H2O = ADP + phosphate + H(+). It catalyses the reaction a ribonucleotidyl-ribonucleotide-RNA + H2O = a 3'-end 3'-phospho-ribonucleotide-RNA + a 5'-end dephospho-ribonucleoside-RNA + H(+). The enzyme catalyses a ribonucleotidyl-ribonucleotide-RNA = a 3'-end 2',3'-cyclophospho-ribonucleotide-RNA + a 5'-end dephospho-ribonucleoside-RNA. It carries out the reaction a 3'-end 2',3'-cyclophospho-ribonucleotide-RNA + H2O = a 3'-end 3'-phospho-ribonucleotide-RNA + H(+). Its activity is regulated as follows. Inhibited by Zn(2+), which binds the catalytic site. Functionally, leader cysteine autoprotease that cleaves itself from the nascent polyprotein during translation of the viral mRNA. Once released, plays a role in the inhibition of host innate immune response by interacting with host IRF3 and inducing its proteasomal degradation. Packages viral RNA to form a viral nucleocapsid and thereby protects viral RNA. Also plays a role in transcription regulation. Protects the incoming virus against IFN-induced effectors. Its function is as follows. Initial binding to target cell probably involves interaction of E(rns) with glycosaminoglycans. Also possesses intrinsic ribonuclease (RNase) activity that can inhibit the production of type I interferon and assist in the development of persistent infections. In terms of biological role, E1 and/or E2 are probably responsible of cell attachment with CD46 and subsequent fusion after internalization of the virion by endocytosis. Functionally, E1 and/or E2 are probably responsible of cell attachment with CD46 and subsequent fusion after internalization of the virion by endocytosis. Probably functions as a coeffector of fusion providing structural integrity to the fusion complex and possibly controlling exposure of the fusion motif in E1. Plays an essential role in the virus replication cycle by acting as a viroporin. Forms ion conductive pores, which alters the cell permeability allowing the transport of ions and other small molecules. Forms a leader sequence to properly orient NS2 in the membrane. Its function is as follows. Uncleaved NS2-3 is required for production of infectious virus. In terms of biological role, plays a role in the regulation of viral RNA replication. Functionally, multifunctional protein that contains an N-terminal protease and a C-terminal helicase, playing essential roles in viral polyprotein processing and viral genome replication. The chymotrypsin-like serine protease activity utilizes NS4A as an essential cofactor and catalyzes the cleavage of the polyprotein leading to the release of NS4A, NS4B, NS5A, and NS5B. Interacts with NS5B to enhance RNA-dependent RNA polymerase activity. Acts as a cofactor for the NS3 protease activity. Its function is as follows. Induces a specific membrane alteration that serves as a scaffold for the virus replication complex. Plays a role in the inhibition of host innate immune response by inhibiting RIGI/IFIH1-mediated IFN-beta production. In terms of biological role, replicates the viral (+) and (-) genome. Initiates the primer-independent RNA replication via a de novo mechanism requiring GTP. This chain is Genome polyprotein, found in Bos taurus (Bovine).